The chain runs to 367 residues: UDP-N-acetylglucosamine--N-acetylmuramyl-(pentapeptide) pyrophosphoryl-undecaprenol N-acetylglucosamine transferase (367 aa).

Residues 15–17, asparagine 127, arginine 163, serine 191, isoleucine 249, and glutamine 294 contribute to the UDP-N-acetyl-alpha-D-glucosamine site; that span reads TGG.

It belongs to the glycosyltransferase 28 family. MurG subfamily.

The protein localises to the cell inner membrane. The catalysed reaction is di-trans,octa-cis-undecaprenyl diphospho-N-acetyl-alpha-D-muramoyl-L-alanyl-D-glutamyl-meso-2,6-diaminopimeloyl-D-alanyl-D-alanine + UDP-N-acetyl-alpha-D-glucosamine = di-trans,octa-cis-undecaprenyl diphospho-[N-acetyl-alpha-D-glucosaminyl-(1-&gt;4)]-N-acetyl-alpha-D-muramoyl-L-alanyl-D-glutamyl-meso-2,6-diaminopimeloyl-D-alanyl-D-alanine + UDP + H(+). The protein operates within cell wall biogenesis; peptidoglycan biosynthesis. Functionally, cell wall formation. Catalyzes the transfer of a GlcNAc subunit on undecaprenyl-pyrophosphoryl-MurNAc-pentapeptide (lipid intermediate I) to form undecaprenyl-pyrophosphoryl-MurNAc-(pentapeptide)GlcNAc (lipid intermediate II). The chain is UDP-N-acetylglucosamine--N-acetylmuramyl-(pentapeptide) pyrophosphoryl-undecaprenol N-acetylglucosamine transferase from Burkholderia vietnamiensis (strain G4 / LMG 22486) (Burkholderia cepacia (strain R1808)).